Reading from the N-terminus, the 158-residue chain is S-ribosylhomocysteine lyase (158 aa).

Fe cation contacts are provided by H57, H61, and C125.

This sequence belongs to the LuxS family. Homodimer. The cofactor is Fe cation.

It carries out the reaction S-(5-deoxy-D-ribos-5-yl)-L-homocysteine = (S)-4,5-dihydroxypentane-2,3-dione + L-homocysteine. Its function is as follows. Involved in the synthesis of autoinducer 2 (AI-2) which is secreted by bacteria and is used to communicate both the cell density and the metabolic potential of the environment. The regulation of gene expression in response to changes in cell density is called quorum sensing. Catalyzes the transformation of S-ribosylhomocysteine (RHC) to homocysteine (HC) and 4,5-dihydroxy-2,3-pentadione (DPD). This chain is S-ribosylhomocysteine lyase, found in Deinococcus radiodurans (strain ATCC 13939 / DSM 20539 / JCM 16871 / CCUG 27074 / LMG 4051 / NBRC 15346 / NCIMB 9279 / VKM B-1422 / R1).